A 432-amino-acid chain; its full sequence is Delta-aminolevulinic acid dehydratase, chloroplastic (432 aa).

The interval 84–113 (AAPPVPAKPSAPEGTPAISPLVMPARPRRN) is disordered. The active-site Schiff-base intermediate with substrate is the Lys300. The 5-aminolevulinate site is built by Arg310 and Lys322. Glu338 serves as a coordination point for Mg(2+). Catalysis depends on Lys353, which acts as the Schiff-base intermediate with substrate. Ser379 and Tyr418 together coordinate 5-aminolevulinate.

Belongs to the ALAD family. Homooctamer. Mg(2+) is required as a cofactor.

The protein resides in the plastid. Its subcellular location is the chloroplast. It carries out the reaction 2 5-aminolevulinate = porphobilinogen + 2 H2O + H(+). It participates in porphyrin-containing compound metabolism; protoporphyrin-IX biosynthesis; coproporphyrinogen-III from 5-aminolevulinate: step 1/4. Functionally, catalyzes an early step in the biosynthesis of tetrapyrroles. Binds two molecules of 5-aminolevulinate per subunit, each at a distinct site, and catalyzes their condensation to form porphobilinogen. The chain is Delta-aminolevulinic acid dehydratase, chloroplastic (HEMB) from Physcomitrium patens (Spreading-leaved earth moss).